A 396-amino-acid polypeptide reads, in one-letter code: Phosphoglycerate kinase (396 aa).

Substrate is bound by residues 21–23, Arg36, 59–62, Arg118, and Arg151; these read DLN and HFDR. ATP-binding positions include Lys201, Glu323, and 353–356; that span reads GGDT.

The protein belongs to the phosphoglycerate kinase family. As to quaternary structure, monomer.

Its subcellular location is the cytoplasm. The catalysed reaction is (2R)-3-phosphoglycerate + ATP = (2R)-3-phospho-glyceroyl phosphate + ADP. It participates in carbohydrate degradation; glycolysis; pyruvate from D-glyceraldehyde 3-phosphate: step 2/5. The sequence is that of Phosphoglycerate kinase from Granulibacter bethesdensis (strain ATCC BAA-1260 / CGDNIH1).